Reading from the N-terminus, the 160-residue chain is MTDQLTHFNEQNRARMVDVSEKDVTKRVAVAESQISMKPETLARIREGRIEKGDVLAVAQVAGVMAAKKTWEIIPMCHPLPLTGIDIQFAFEDETTLAITGTVKTTGKTGVEMEALTAVSVAALTVYDMCKAMDKEMIIGPTSLQSKTGGKSGDFHRGEK.

Substrate is bound by residues 76–78 and 113–114; these read MCH and ME. The active site involves aspartate 128.

Belongs to the MoaC family. In terms of assembly, homohexamer; trimer of dimers.

The catalysed reaction is (8S)-3',8-cyclo-7,8-dihydroguanosine 5'-triphosphate = cyclic pyranopterin phosphate + diphosphate. Its pathway is cofactor biosynthesis; molybdopterin biosynthesis. Its function is as follows. Catalyzes the conversion of (8S)-3',8-cyclo-7,8-dihydroguanosine 5'-triphosphate to cyclic pyranopterin monophosphate (cPMP). This Brevibacillus brevis (strain 47 / JCM 6285 / NBRC 100599) protein is Cyclic pyranopterin monophosphate synthase.